The sequence spans 147 residues: 3-hydroxyacyl-[acyl-carrier-protein] dehydratase FabZ (147 aa).

Residue His50 is part of the active site.

The protein belongs to the thioester dehydratase family. FabZ subfamily.

Its subcellular location is the cytoplasm. The catalysed reaction is a (3R)-hydroxyacyl-[ACP] = a (2E)-enoyl-[ACP] + H2O. Its function is as follows. Involved in unsaturated fatty acids biosynthesis. Catalyzes the dehydration of short chain beta-hydroxyacyl-ACPs and long chain saturated and unsaturated beta-hydroxyacyl-ACPs. The protein is 3-hydroxyacyl-[acyl-carrier-protein] dehydratase FabZ of Lactiplantibacillus plantarum (strain ATCC BAA-793 / NCIMB 8826 / WCFS1) (Lactobacillus plantarum).